A 184-amino-acid polypeptide reads, in one-letter code: Dual-action ribosomal maturation protein DarP (184 aa).

The segment at 1–21 (MYKHPDEEWLDEIPGQQENED) is disordered.

Belongs to the DarP family.

The protein resides in the cytoplasm. Functionally, member of a network of 50S ribosomal subunit biogenesis factors which assembles along the 30S-50S interface, preventing incorrect 23S rRNA structures from forming. Promotes peptidyl transferase center (PTC) maturation. The polypeptide is Dual-action ribosomal maturation protein DarP (Edwardsiella ictaluri (strain 93-146)).